Reading from the N-terminus, the 843-residue chain is F-box only protein 11 (843 aa).

A disordered region spans residues 1 to 63 (MVAEESGPGA…RVSGKSQDLS (63 aa)). Polar residues predominate over residues 30–45 (PTKNSMEGASTSTTEN). The F-box domain occupies 69 to 115 (QYLQEKLPDEVVLKIFSYLLEQDLCRAACVCKRFSELANDPILWKRL). PbH1 repeat units follow at residues 311-333 (GACPTIKHCNISDCENVGLYITD), 334-356 (HAQGIYEDNEISNNALAGIWVKN), 357-379 (HGNPIIRRNHIHHGRDVGVFTFD), 380-402 (HGMGYFESCNIHRNRIAGFEVKA), 403-425 (YANPTVVRCEIHHGQTGGIYVHE), 426-448 (KGRGQFIENKIYANNFAGVWITS), 449-471 (NSDPTIRGNSIFNGNQGGVYIFG), 472-494 (DGRGLIEGNDIYGNALAGIQIRT), 495-517 (NSCPIVRHNKIHDGQHGGIYVHE), 518-540 (KGQGVIEENEVYSNTLAGVWVTT), 541-563 (GSTPVLRRNRIHSGKQVGVYFYD), 564-586 (NGHGVLEDNDIYNHMYSGVQIRT), 587-609 (GSNPKIRRNKIWGGQNGGILVYN), 610-632 (SGLGCIEDNEIFDNAMAGVWIKT), 633-655 (DSNPTLRRNKIHDGRDGGICIFN), 656-678 (GGRGLLEENDIFRNAQAGVLIST), 679-701 (NSHPVLRKNRIFDGFAAGIEITN), 702-724 (HATATLEGNQIFNNRFGGLFLAS), and 725-746 (GVNVTMKDNKIMNNQDAIEKAV). The UBR-type zinc finger occupies 749-820 (GQCLYKISSY…LSNPCTLAGE (72 aa)).

As to quaternary structure, component of the SCF(FBXO11) complex consisting of CUL1, RBX1, SKP1 and FBXO11. Interacts with CIITA.

The protein localises to the nucleus. It is found in the chromosome. It functions in the pathway protein modification; protein ubiquitination. Its function is as follows. Substrate recognition component of a SCF (SKP1-CUL1-F-box protein) E3 ubiquitin-protein ligase complex which mediates the ubiquitination and subsequent proteasomal degradation of target proteins, such as DTL/CDT2, BCL6, SNAI1 and PRDM1/BLIMP1. The SCF(FBXO11) complex mediates ubiquitination and degradation of BCL6, thereby playing a role in the germinal center B-cells terminal differentiation toward memory B-cells and plasma cells. The SCF(FBXO11) complex also mediates ubiquitination and degradation of DTL, an important step for the regulation of TGF-beta signaling, cell migration and the timing of the cell-cycle progression and exit. The SCF(FBXO11) complex also catalyzes ubiquitination and degradation of GSK3B-phosphorylated SNAI1. Binds to and neddylates phosphorylated p53/TP53, inhibiting its transcriptional activity. Plays a role in the regulatiom of erythropoiesis but not myelopoiesis or megakaryopoiesis. Mechanistically, activates erythroid genes by mediating the degradation of BAHD1, a heterochromatin-associated protein that recruits corepressors to H3K27me3 marks. Participates in macrophage cell death and inflammation in response to bacterial toxins by regulating the expression of complement 5a receptor 1/C5AR1 and IL-1beta. Acts as a critical regulator to determine the level of MHC-II by mediating the recognition of degron at the P/S/T domain of CIITA leading to its ubiquitination and subsequent degradation via the proteasome. Participates in the antiviral repsonse by initiating the activation of TBK1-IRF3-IFN-I axis. Mediates the 'Lys-63'-linked ubiquitination of TRAF3 to strengthen the interaction between TRAF3 and TBK1. This chain is F-box only protein 11 (Fbxo11), found in Rattus norvegicus (Rat).